The chain runs to 176 residues: MSEQKQEFENENAENSEHLQDENLQNIEDVEQNKLQKDYDELKDKYMRANAEFENIKKRMEKEKLSAMAYANESFAKDLLDVLDALEAAVNVECQDEISLKIKEGVQNTLDLFLKKLEKHGVALIKDEKEFDPNLHEAMFHVDSENHQSGEVVQVLQKGYKIADRVIRPTKVSVAK.

The disordered stretch occupies residues 1–28; the sequence is MSEQKQEFENENAENSEHLQDENLQNIE.

Belongs to the GrpE family. In terms of assembly, homodimer.

It is found in the cytoplasm. Its function is as follows. Participates actively in the response to hyperosmotic and heat shock by preventing the aggregation of stress-denatured proteins, in association with DnaK and GrpE. It is the nucleotide exchange factor for DnaK and may function as a thermosensor. Unfolded proteins bind initially to DnaJ; upon interaction with the DnaJ-bound protein, DnaK hydrolyzes its bound ATP, resulting in the formation of a stable complex. GrpE releases ADP from DnaK; ATP binding to DnaK triggers the release of the substrate protein, thus completing the reaction cycle. Several rounds of ATP-dependent interactions between DnaJ, DnaK and GrpE are required for fully efficient folding. In Campylobacter jejuni subsp. jejuni serotype O:2 (strain ATCC 700819 / NCTC 11168), this protein is Protein GrpE.